A 346-amino-acid chain; its full sequence is Holliday junction branch migration complex subunit RuvB (346 aa).

The interval 4-185 (SDRIITASPF…FGIVSRLEFY (182 aa)) is large ATPase domain (RuvB-L). ATP-binding positions include Leu24, Arg25, Gly66, Lys69, Thr70, Thr71, 132 to 134 (EDY), Arg175, Tyr185, and Arg222. Position 70 (Thr70) interacts with Mg(2+). The segment at 186 to 256 (TSDELSKIVT…VADAALQMLD (71 aa)) is small ATPAse domain (RuvB-S). The interval 259–346 (AAGLDVLDRK…AATPGLFNPD (88 aa)) is head domain (RuvB-H). DNA contacts are provided by Arg295, Arg314, and Arg319.

Belongs to the RuvB family. In terms of assembly, homohexamer. Forms an RuvA(8)-RuvB(12)-Holliday junction (HJ) complex. HJ DNA is sandwiched between 2 RuvA tetramers; dsDNA enters through RuvA and exits via RuvB. An RuvB hexamer assembles on each DNA strand where it exits the tetramer. Each RuvB hexamer is contacted by two RuvA subunits (via domain III) on 2 adjacent RuvB subunits; this complex drives branch migration. In the full resolvosome a probable DNA-RuvA(4)-RuvB(12)-RuvC(2) complex forms which resolves the HJ.

The protein localises to the cytoplasm. The catalysed reaction is ATP + H2O = ADP + phosphate + H(+). Functionally, the RuvA-RuvB-RuvC complex processes Holliday junction (HJ) DNA during genetic recombination and DNA repair, while the RuvA-RuvB complex plays an important role in the rescue of blocked DNA replication forks via replication fork reversal (RFR). RuvA specifically binds to HJ cruciform DNA, conferring on it an open structure. The RuvB hexamer acts as an ATP-dependent pump, pulling dsDNA into and through the RuvAB complex. RuvB forms 2 homohexamers on either side of HJ DNA bound by 1 or 2 RuvA tetramers; 4 subunits per hexamer contact DNA at a time. Coordinated motions by a converter formed by DNA-disengaged RuvB subunits stimulates ATP hydrolysis and nucleotide exchange. Immobilization of the converter enables RuvB to convert the ATP-contained energy into a lever motion, pulling 2 nucleotides of DNA out of the RuvA tetramer per ATP hydrolyzed, thus driving DNA branch migration. The RuvB motors rotate together with the DNA substrate, which together with the progressing nucleotide cycle form the mechanistic basis for DNA recombination by continuous HJ branch migration. Branch migration allows RuvC to scan DNA until it finds its consensus sequence, where it cleaves and resolves cruciform DNA. The polypeptide is Holliday junction branch migration complex subunit RuvB (Nitrosomonas eutropha (strain DSM 101675 / C91 / Nm57)).